A 480-amino-acid chain; its full sequence is Initiation-specific alpha-1,6-mannosyltransferase (480 aa).

Residues 1-15 (MSRKLSHLIATRKSK) are Cytoplasmic-facing. A helical; Signal-anchor for type II membrane protein membrane pass occupies residues 16–30 (TIVVTVLLIYSLLTF). Over 31–480 (HLSNKRLLSQ…EDADKNAGHK (450 aa)) the chain is Lumenal. A DXD motif motif is present at residues 187-189 (DMD). N-linked (GlcNAc...) asparagine glycans are attached at residues Asn-203, Asn-281, Asn-341, and Asn-393.

It belongs to the glycosyltransferase 32 family. Mn(2+) serves as cofactor. In terms of processing, glycosylated.

The protein localises to the endoplasmic reticulum membrane. Its subcellular location is the golgi apparatus membrane. The enzyme catalyses Transfers an alpha-D-mannosyl residue from GDP-mannose into lipid-linked oligosaccharide, forming an alpha-(1-&gt;6)-D-mannosyl-D-mannose linkage.. In terms of biological role, mannosyltransferase involved in outer chain elongation of asparagine-linked oligosaccharides of the type Man(9)GlcNAc(2). Adds the first alpha-1,6-mannose to the Man(8)GlcNAc(2) and Man(9)GlcNAc(2), but not Man(5)GlcNAc(2), endoplasmic reticulum intermediates. Represents the first enzymatic event required for synthesis of outer chain mannose linkages on yeast secretory proteins. Also has the potential to transfer a second alpha-1,6-mannose to the Man(8)GlcNAc(2) core oligosaccharide. The polypeptide is Initiation-specific alpha-1,6-mannosyltransferase (Saccharomyces cerevisiae (strain ATCC 204508 / S288c) (Baker's yeast)).